We begin with the raw amino-acid sequence, 348 residues long: Ubiquitin thioesterase OTU1 (348 aa).

Over residues 1–11 (MFGPAKGRHFG) the composition is skewed to basic residues. Residues 1–39 (MFGPAKGRHFGVHPAPGFPGGVSQQAAGTKAGPAGAWPV) are disordered. The UBX-like stretch occupies residues 50 to 128 (RCKAKDGTHV…IIEEDQTRPR (79 aa)). Residues 149-274 (LTRTVVPADN…GIHYDPLQRN (126 aa)) enclose the OTU domain. The tract at residues 154–160 (VPADNSC) is cys-loop. The active site involves Asp-157. Cys-160 (nucleophile) is an active-site residue. Residues 213-223 (IKRDDTWGGAI) form a variable-loop region. The segment at 263–267 (YDGIH) is his-loop. A substrate-binding site is contributed by Ile-266. His-267 is an active-site residue. The S2 site stretch occupies residues 291-296 (DIVLVQ). Residues 318–342 (LRCMVCQKGLTGQAEAREHAKETGH) form a C2H2-type zinc finger. His-342 is a catalytic residue.

Interacts with VCP; the interaction is direct. Interacts with FAF2/UBXD8. Interacts with DERL1; however interaction is dependent on the UBAX-like region, suggesting that it may be indirect. Interacts with PLAA, UBXN6 and VCP; may form a complex involved in macroautophagy.

It localises to the cytoplasm. It catalyses the reaction Thiol-dependent hydrolysis of ester, thioester, amide, peptide and isopeptide bonds formed by the C-terminal Gly of ubiquitin (a 76-residue protein attached to proteins as an intracellular targeting signal).. Hydrolase that can remove conjugated ubiquitin from proteins and participates in endoplasmic reticulum-associated degradation (ERAD) for misfolded lumenal proteins. May act by triming the ubiquitin chain on the associated substrate to facilitate their threading through the VCP/p97 pore. Ubiquitin moieties on substrates may present a steric impediment to the threading process when the substrate is transferred to the VCP pore and threaded through VCP's axial channel. Mediates deubiquitination of 'Lys-27'-, 'Lys-29'- and 'Lys-33'-linked polyubiquitin chains. Also able to hydrolyze 'Lys-11'-linked ubiquitin chains. Cleaves both polyubiquitin and di-ubiquitin. May play a role in macroautophagy, regulating for instance the clearance of damaged lysosomes. May recruit PLAA, UBXN6 and VCP to damaged lysosome membranes decorated with K48-linked ubiquitin chains and remove these chains allowing autophagosome formation. This chain is Ubiquitin thioesterase OTU1 (YOD1), found in Homo sapiens (Human).